A 441-amino-acid chain; its full sequence is Glutamate-1-semialdehyde 2,1-aminomutase (441 aa).

Lys-276 is subject to N6-(pyridoxal phosphate)lysine.

The protein belongs to the class-III pyridoxal-phosphate-dependent aminotransferase family. HemL subfamily. In terms of assembly, homodimer. The cofactor is pyridoxal 5'-phosphate.

Its subcellular location is the cytoplasm. It catalyses the reaction (S)-4-amino-5-oxopentanoate = 5-aminolevulinate. The protein operates within porphyrin-containing compound metabolism; protoporphyrin-IX biosynthesis; 5-aminolevulinate from L-glutamyl-tRNA(Glu): step 2/2. The chain is Glutamate-1-semialdehyde 2,1-aminomutase from Rhodococcus jostii (strain RHA1).